Reading from the N-terminus, the 1222-residue chain is ATP-dependent helicase/nuclease subunit A (1222 aa).

The 457-residue stretch at 39–495 (QKRTAQQIEA…ILLKENFRSQ (457 aa)) folds into the UvrD-like helicase ATP-binding domain. 60–67 (ASAGSGKT) provides a ligand contact to ATP. One can recognise a UvrD-like helicase C-terminal domain in the interval 524 to 810 (QLIAGSHAQT…NLMTIHKSKG (287 aa)).

This sequence belongs to the helicase family. AddA subfamily. As to quaternary structure, heterodimer of AddA and AddB/RexB. The cofactor is Mg(2+).

It carries out the reaction Couples ATP hydrolysis with the unwinding of duplex DNA by translocating in the 3'-5' direction.. It catalyses the reaction ATP + H2O = ADP + phosphate + H(+). In terms of biological role, the heterodimer acts as both an ATP-dependent DNA helicase and an ATP-dependent, dual-direction single-stranded exonuclease. Recognizes the chi site generating a DNA molecule suitable for the initiation of homologous recombination. The AddA nuclease domain is required for chi fragment generation; this subunit has the helicase and 3' -&gt; 5' nuclease activities. This chain is ATP-dependent helicase/nuclease subunit A, found in Streptococcus pyogenes serotype M18 (strain MGAS8232).